A 101-amino-acid chain; its full sequence is uncharacterized protein (101 aa).

A helical transmembrane segment spans residues 58–80 (VFPSLNIIILMSDALMFFLRSSI).

It is found in the membrane. This is an uncharacterized protein from Saccharomyces cerevisiae (strain ATCC 204508 / S288c) (Baker's yeast).